A 582-amino-acid polypeptide reads, in one-letter code: A-type ATP synthase subunit A 1 (582 aa).

ATP is bound at residue 231 to 238 (GPFGSGKT).

Belongs to the ATPase alpha/beta chains family. Has multiple subunits with at least A(3), B(3), C, D, E, F, H, I and proteolipid K(x).

Its subcellular location is the cell membrane. It catalyses the reaction ATP + H2O + 4 H(+)(in) = ADP + phosphate + 5 H(+)(out). Component of the A-type ATP synthase that produces ATP from ADP in the presence of a proton gradient across the membrane. The A chain is the catalytic subunit. The chain is A-type ATP synthase subunit A 1 from Methanospirillum hungatei JF-1 (strain ATCC 27890 / DSM 864 / NBRC 100397 / JF-1).